We begin with the raw amino-acid sequence, 202 residues long: FMN-dependent NADH:quinone oxidoreductase (202 aa).

Residues Ser-10 and 95-98 each bind FMN; that span reads MYNF.

It belongs to the azoreductase type 1 family. Homodimer. It depends on FMN as a cofactor.

The enzyme catalyses 2 a quinone + NADH + H(+) = 2 a 1,4-benzosemiquinone + NAD(+). It carries out the reaction N,N-dimethyl-1,4-phenylenediamine + anthranilate + 2 NAD(+) = 2-(4-dimethylaminophenyl)diazenylbenzoate + 2 NADH + 2 H(+). In terms of biological role, quinone reductase that provides resistance to thiol-specific stress caused by electrophilic quinones. Functionally, also exhibits azoreductase activity. Catalyzes the reductive cleavage of the azo bond in aromatic azo compounds to the corresponding amines. The sequence is that of FMN-dependent NADH:quinone oxidoreductase from Alkalilimnicola ehrlichii (strain ATCC BAA-1101 / DSM 17681 / MLHE-1).